The following is a 455-amino-acid chain: Beta-cyclopiazonate dehydrogenase (455 aa).

The N-terminal stretch at 1–20 is a signal peptide; sequence MATRIASFIGISTVASLALA.

It belongs to the beta-cyclopiazonate dehydrogenase family. FAD serves as cofactor.

It catalyses the reaction beta-cyclopiazonate + A = alpha-cyclopiazonate + AH2. Its function is as follows. Beta-cyclopiazonate dehydrogenase involved in the synthesis of the fungal neurotoxin alpha-cyclopiazonic acid (CPA). CpaO carries out the dehydrogenation of beta-CPA to yield an unstable enimine product, which is captured by intramolecular cyclization to create the pentacyclic fused scaffold of alpha-cyclopiazonate. The chain is Beta-cyclopiazonate dehydrogenase from Aspergillus flavus (strain ATCC 200026 / FGSC A1120 / IAM 13836 / NRRL 3357 / JCM 12722 / SRRC 167).